The following is a 216-amino-acid chain: Adenylate kinase (216 aa).

10-15 (GAGKGT) contacts ATP. Positions 30–59 (STGDILRENVKKGTALGLKAKSYMDKGELV) are NMP. AMP-binding positions include Thr31, Arg36, 57–59 (ELV), 85–88 (GFPR), and Gln92. Positions 126–163 (GRRICRSCGASYHLVFNPPKAKDLCDSCGGELYQRDDD) are LID. Arg127 provides a ligand contact to ATP. Residues Cys130 and Cys133 each coordinate Zn(2+). 136–137 (SY) provides a ligand contact to ATP. Cys150 and Cys153 together coordinate Zn(2+). Residues Arg160 and Arg171 each contribute to the AMP site. Lys199 serves as a coordination point for ATP.

It belongs to the adenylate kinase family. In terms of assembly, monomer.

Its subcellular location is the cytoplasm. It catalyses the reaction AMP + ATP = 2 ADP. It functions in the pathway purine metabolism; AMP biosynthesis via salvage pathway; AMP from ADP: step 1/1. In terms of biological role, catalyzes the reversible transfer of the terminal phosphate group between ATP and AMP. Plays an important role in cellular energy homeostasis and in adenine nucleotide metabolism. This is Adenylate kinase from Methanocella arvoryzae (strain DSM 22066 / NBRC 105507 / MRE50).